Here is a 125-residue protein sequence, read N- to C-terminus: Large ribosomal subunit protein bL12 (125 aa).

Belongs to the bacterial ribosomal protein bL12 family. In terms of assembly, homodimer. Part of the ribosomal stalk of the 50S ribosomal subunit. Forms a multimeric L10(L12)X complex, where L10 forms an elongated spine to which 2 to 4 L12 dimers bind in a sequential fashion. Binds GTP-bound translation factors.

Forms part of the ribosomal stalk which helps the ribosome interact with GTP-bound translation factors. Is thus essential for accurate translation. This chain is Large ribosomal subunit protein bL12, found in Mesorhizobium japonicum (strain LMG 29417 / CECT 9101 / MAFF 303099) (Mesorhizobium loti (strain MAFF 303099)).